A 211-amino-acid polypeptide reads, in one-letter code: FMN-dependent NADH:quinone oxidoreductase 2 (211 aa).

Residue 102 to 105 participates in FMN binding; the sequence is MWNF.

The protein belongs to the azoreductase type 1 family. As to quaternary structure, homodimer. Requires FMN as cofactor.

It carries out the reaction 2 a quinone + NADH + H(+) = 2 a 1,4-benzosemiquinone + NAD(+). The enzyme catalyses N,N-dimethyl-1,4-phenylenediamine + anthranilate + 2 NAD(+) = 2-(4-dimethylaminophenyl)diazenylbenzoate + 2 NADH + 2 H(+). Its function is as follows. Quinone reductase that provides resistance to thiol-specific stress caused by electrophilic quinones. In terms of biological role, also exhibits azoreductase activity. Catalyzes the reductive cleavage of the azo bond in aromatic azo compounds to the corresponding amines. This Bacillus thuringiensis subsp. konkukian (strain 97-27) protein is FMN-dependent NADH:quinone oxidoreductase 2.